The chain runs to 192 residues: MASKGPSASASTENSNAGGPSGSSNGTGESGGQDSTFECNICLDTAKDAVISLCGHLFCWPCLHQWLETRPNRQVCPVCKAGISRDKVIPLYGRGSTGQQDPREKTPPRPQGQRPEPENRGGFQGFGFGDGGFQMSFGIGAFPFGIFATAFNINDGRPPPAVPGTPQYVDEQFLSRLFLFVALVIMFWLLIA.

The span at 1 to 13 shows a compositional bias: polar residues; it reads MASKGPSASASTE. The tract at residues 1–30 is disordered; it reads MASKGPSASASTENSNAGGPSGSSNGTGES. The Cytoplasmic portion of the chain corresponds to 1 to 130; it reads MASKGPSASA…GGFQGFGFGD (130 aa). Over residues 14-27 the composition is skewed to low complexity; it reads NSNAGGPSGSSNGT. Residues 29 to 80 are required for ubiquitin ligase activity and protection against ER stress-induced cell death; sequence ESGGQDSTFECNICLDTAKDAVISLCGHLFCWPCLHQWLETRPNRQVCPVCK. The RING-type zinc-finger motif lies at 39–80; it reads CNICLDTAKDAVISLCGHLFCWPCLHQWLETRPNRQVCPVCK. Residues 90–123 are disordered; the sequence is PLYGRGSTGQQDPREKTPPRPQGQRPEPENRGGF. Residues 131 to 151 form a helical membrane-spanning segment; sequence GGFQMSFGIGAFPFGIFATAF. At 152-171 the chain is on the mitochondrial intermembrane side; it reads NINDGRPPPAVPGTPQYVDE. Residues 172-192 form a helical membrane-spanning segment; the sequence is QFLSRLFLFVALVIMFWLLIA.

As to quaternary structure, interacts with ATG5 and BNIP1. In terms of tissue distribution, ubiquitously expressed with high expression in testis.

It localises to the mitochondrion outer membrane. The protein resides in the endoplasmic reticulum membrane. It carries out the reaction S-ubiquitinyl-[E2 ubiquitin-conjugating enzyme]-L-cysteine + [acceptor protein]-L-lysine = [E2 ubiquitin-conjugating enzyme]-L-cysteine + N(6)-ubiquitinyl-[acceptor protein]-L-lysine.. Its pathway is protein modification; protein ubiquitination. Functionally, E3 ubiquitin-protein ligase that regulates selective mitochondrial autophagy by mediating 'Lys-63'-linked polyubiquitination of BNIP1. Acts in the endoplasmic reticulum (ER)-associated degradation (ERAD) pathway, which targets misfolded proteins that accumulate in the endoplasmic reticulum (ER) for ubiquitination and subsequent proteasome-mediated degradation. Protects cells from ER stress-induced apoptosis. Responsible for the cotranslational ubiquitination and degradation of CFTR in the ERAD pathway. Also acts as a regulator of the innate antiviral response by catalyzing 'Lys-27'-linked polyubiquitination of CGAS, thereby promoting CGAS cyclic GMP-AMP synthase activity. Preferentially associates with the E2 enzymes UBE2J1 and UBE2J2. This chain is E3 ubiquitin-protein ligase RNF185 (Rnf185), found in Mus musculus (Mouse).